The chain runs to 255 residues: dTDP-3-amino-3,6-dideoxy-alpha-D-glucopyranose N,N-dimethyltransferase (255 aa).

S-adenosyl-L-methionine-binding positions include Tyr-14, Tyr-22, Tyr-33, Ala-58, Ala-58–Cys-59, Glu-79, Asp-101–Met-102, and Met-117.

This sequence belongs to the methyltransferase TylM1/DesVI family. Homodimer.

The enzyme catalyses dTDP-3-amino-3,6-dideoxy-alpha-D-glucose + 2 S-adenosyl-L-methionine = dTDP-alpha-D-mycaminose + 2 S-adenosyl-L-homocysteine + 2 H(+). Its pathway is antibiotic biosynthesis; tylosin biosynthesis. Functionally, S-adenosyl-L-methionine-dependent methyltransferase involved in the biosynthesis of mycaminose, an essential structural component of the macrolide antibiotic tylosin. Involved in the last step in mycaminose biosynthesis by mediating dimethylation of the hexose C-3' amino group. This is dTDP-3-amino-3,6-dideoxy-alpha-D-glucopyranose N,N-dimethyltransferase (tylM1) from Streptomyces fradiae (Streptomyces roseoflavus).